Here is a 1573-residue protein sequence, read N- to C-terminus: MAFSKGFRIYHKLDPPPFSLIVETRHKEECLMFESGAVAVLSSAEKEAIKGTYSKVLDAYGLLGVLRLNLGDTMLHYLVLVTGCMSVGKIQESEVFRVTSTEFISLRIDSSDEDRISEVRKVLNSGNFYFAWSASGISLDLSLNAHRSMQEQTTDNRFFWNQSLHLHLKHYGVNCDDWLLRLMCGGVEIRTIYAAHKQAKACLISRLSCERAGTRFNVRGTNDDGHVANFVETEQVVYLDDSVSSFIQIRGSVPLFWEQPGLQVGSHRVRMSRGFEANAPAFDRHFRTLKNLYGKQIIVNLLGSKEGEHMLSKAFQSHLKASEHAADIQMVNFDYHQMVKGGKAEKLHSVLKPQVQKFLDYGFFYFNGSEVQRCQSGTVRTNCLDCLDRTNSVQAFLGLEMLAKQLEALGLAEKPQLVTRFQEVFRSMWSVNGDSISKIYAGTGALEGKAKLKDGARSVTRTIQNNFFDSSKQEAIDVLLLGNTLNSDLADKARALLTTGSLRVSEQTLQSASSKVLKSMCENFYKYSKPKKIRVCVGTWNVNGGKQFRSIAFKNQTLTDWLLDAPKLAGIQEFQDKRSKPTDIFAIGFEEMVELNAGNIVSASTTNQKLWAVELQKTISRDNKYVLLASEQLVGVCLFVFIRPQHAPFIRDVAVDTVKTGMGGATGNKGAVAIRMLFHTTSLCFVCSHFAAGQSQVKERNEDFIEIARKLSFPMGRMLFSHDYVFWCGDFNYRIDLPNEEVKELIRQQNWDSLIAGDQLINQKNAGQVFRGFLEGKVTFAPTYKYDLFSDDYDTSEKCRTPAWTDRVLWRRRKWPFDRSAEDLDLLNASFQDESKILYTWTPGTLLHYGRAELKTSDHRPVVALIDIDIFEVEAEERQNIYKEVIAVQGPPDGTVLVSIKSSLPENNFFDDALIDELLQQFASFGEVILIRFVEDKMWVTFLEGSSALNVLSLNGKELLNRTITIALKSPDWIKNLEEEMSLEKISIALPSSTSSTLLGEDAEVAADFDMEGDVDDYSAEVEELLPQHLQPSSSSGLGTSPSSSPRTSPCQSPTISEGPVPSLPIRPSRAPSRTPGPPSAQSSPIDAQPATPLPQKDPAQPLEPKRPPPPRPVAPPTRPAPPQRPPPPSGARSPAPTRKEFGGIGAPPSPGVARREMEAPKSPGTTRKDNIGRSQPSPQAGLAGPGPAGYSTARPTIPPRAGVISAPQSHARASAGRLTPESQSKTSETSKGSTFLPEPLKPQAAFPPQSSLPPPAQRLQEPLVPVAAPMPQSGPQPNLETPPQPPPRSRSSHSLPSEASSQPQVKTNGISDGKRESPLKIDPFEDLSFNLLAVSKAQLSVQTSPVPTPDPKRLIQLPSATQSNVLSSVSCMPTMPPIPARSQSQENMRSSPNPFITGLTRTNPFSDRTAAPGNPFRAKSEESEATSWFSKEEPVTISPFPSLQPLGHNKSRASSSLDGFKDSFDLQGQSTLKISNPKGWVTFEEEEDFGVKGKSKSACSDLLGNQPSSFSGSNLTLNDDWNKGTNVSFCVLPSRRPPPPPVPLLPPGTSPPVDPFTTLASKASPTLDFTER.

The region spanning 119 to 442 (VRKVLNSGNF…GDSISKIYAG (324 aa)) is the SAC domain. The segment at 500-899 (GSLRVSEQTL…GPPDGTVLVS (400 aa)) is catalytic. Phosphoserine is present on residues Ser820 and Ser830. Residues 902-971 (SSLPENNFFD…RTITIALKSP (70 aa)) form the RRM domain. The span at 1029 to 1054 (HLQPSSSSGLGTSPSSSPRTSPCQSP) shows a compositional bias: low complexity. Disordered stretches follow at residues 1029–1322 (HLQP…PLKI), 1341–1360 (SVQT…QLPS), 1370–1463 (VSCM…GFKD), and 1535–1573 (SRRP…FTER). Ser1053 is subject to Phosphoserine. Positions 1108-1130 (PPPPRPVAPPTRPAPPQRPPPPS) are enriched in pro residues. A phosphoserine mark is found at Ser1150 and Ser1178. The residue at position 1201 (Arg1201) is an Omega-N-methylarginine. Thr1220 bears the Phosphothreonine mark. Over residues 1221–1234 (PESQSKTSETSKGS) the composition is skewed to polar residues. Position 1292 is a phosphoserine (Ser1292). Residues 1293 to 1304 (SHSLPSEASSQP) show a composition bias toward low complexity. A compositionally biased stretch (basic and acidic residues) spans 1313-1322 (DGKRESPLKI). Residues Ser1318 and Ser1345 each carry the phosphoserine modification. At Thr1349 the chain carries Phosphothreonine. Over residues 1382–1407 (RSQSQENMRSSPNPFITGLTRTNPFS) the composition is skewed to polar residues. Tandem repeats lie at residues 1396 to 1398 (FIT), 1406 to 1408 (FSD), and 1417 to 1419 (FRA). The tract at residues 1396–1419 (FITGLTRTNPFSDRTAAPGNPFRA) is 3 X 3 AA repeats of N-P-F. A compositionally biased stretch (pro residues) spans 1536-1555 (RRPPPPPVPLLPPGTSPPVD). Phosphoserine occurs at positions 1551 and 1565.

It belongs to the synaptojanin family. In the central section; belongs to the inositol 1,4,5-trisphosphate 5-phosphatase family. Interacts with ASH/GRB2. Interacts with PACSIN1, PACSIN2 and PACSIN3. Interacts with AMPH, SH3GL1, SH3GL2 and SH3GL3. Interacts with MYO1E (via SH3 domain). Interacts with BIN1 and DNM1. Interacts with EPS15.

It is found in the cytoplasm. It localises to the perinuclear region. The enzyme catalyses a 1,2-diacyl-sn-glycero-3-phospho-(1D-myo-inositol-4,5-bisphosphate) + H2O = a 1,2-diacyl-sn-glycero-3-phospho-(1D-myo-inositol 4-phosphate) + phosphate. Functionally, phosphatase that acts on various phosphoinositides, including phosphatidylinositol 4-phosphate, phosphatidylinositol (4,5)-bisphosphate and phosphatidylinositol (3,4,5)-trisphosphate. Has a role in clathrin-mediated endocytosis. Hydrolyzes PIP2 bound to actin regulatory proteins resulting in the rearrangement of actin filaments downstream of tyrosine kinase and ASH/GRB2. The chain is Synaptojanin-1 (SYNJ1) from Homo sapiens (Human).